The primary structure comprises 735 residues: Catalase-peroxidase (735 aa).

Positions Met1–Gly10 are enriched in polar residues. Positions Met1–Ser20 are disordered. The tryptophyl-tyrosyl-methioninium (Trp-Tyr) (with M-254) cross-link spans Trp100–Tyr228. The active-site Proton acceptor is the His101. A cross-link (tryptophyl-tyrosyl-methioninium (Tyr-Met) (with W-100)) is located at residues Tyr228–Met254. His269 provides a ligand contact to heme b.

Belongs to the peroxidase family. Peroxidase/catalase subfamily. As to quaternary structure, homodimer or homotetramer. Heme b serves as cofactor. Post-translationally, formation of the three residue Trp-Tyr-Met cross-link is important for the catalase, but not the peroxidase activity of the enzyme.

It carries out the reaction H2O2 + AH2 = A + 2 H2O. It catalyses the reaction 2 H2O2 = O2 + 2 H2O. Functionally, bifunctional enzyme with both catalase and broad-spectrum peroxidase activity. The sequence is that of Catalase-peroxidase from Jannaschia sp. (strain CCS1).